We begin with the raw amino-acid sequence, 430 residues long: Enolase (430 aa).

Gln-165 contributes to the (2R)-2-phosphoglycerate binding site. Residue Glu-207 is the Proton donor of the active site. The Mg(2+) site is built by Asp-244, Glu-287, and Asp-314. Residues Lys-339, Arg-368, Ser-369, and Lys-390 each coordinate (2R)-2-phosphoglycerate. The active-site Proton acceptor is the Lys-339.

The protein belongs to the enolase family. As to quaternary structure, component of the RNA degradosome, a multiprotein complex involved in RNA processing and mRNA degradation. It depends on Mg(2+) as a cofactor.

The protein localises to the cytoplasm. It is found in the secreted. It localises to the cell surface. The enzyme catalyses (2R)-2-phosphoglycerate = phosphoenolpyruvate + H2O. It functions in the pathway carbohydrate degradation; glycolysis; pyruvate from D-glyceraldehyde 3-phosphate: step 4/5. Catalyzes the reversible conversion of 2-phosphoglycerate (2-PG) into phosphoenolpyruvate (PEP). It is essential for the degradation of carbohydrates via glycolysis. This chain is Enolase, found in Xanthomonas campestris pv. campestris (strain 8004).